Consider the following 610-residue polypeptide: Dihydroxy-acid dehydratase (610 aa).

Mg(2+) is bound at residue aspartate 81. Cysteine 122 contacts [2Fe-2S] cluster. The Mg(2+) site is built by aspartate 123 and lysine 124. Lysine 124 bears the N6-carboxylysine mark. Cysteine 196 is a binding site for [2Fe-2S] cluster. Position 492 (glutamate 492) interacts with Mg(2+). Serine 518 serves as the catalytic Proton acceptor.

The protein belongs to the IlvD/Edd family. As to quaternary structure, homodimer. Requires [2Fe-2S] cluster as cofactor. Mg(2+) serves as cofactor.

The catalysed reaction is (2R)-2,3-dihydroxy-3-methylbutanoate = 3-methyl-2-oxobutanoate + H2O. It catalyses the reaction (2R,3R)-2,3-dihydroxy-3-methylpentanoate = (S)-3-methyl-2-oxopentanoate + H2O. The protein operates within amino-acid biosynthesis; L-isoleucine biosynthesis; L-isoleucine from 2-oxobutanoate: step 3/4. Its pathway is amino-acid biosynthesis; L-valine biosynthesis; L-valine from pyruvate: step 3/4. Functionally, functions in the biosynthesis of branched-chain amino acids. Catalyzes the dehydration of (2R,3R)-2,3-dihydroxy-3-methylpentanoate (2,3-dihydroxy-3-methylvalerate) into 2-oxo-3-methylpentanoate (2-oxo-3-methylvalerate) and of (2R)-2,3-dihydroxy-3-methylbutanoate (2,3-dihydroxyisovalerate) into 2-oxo-3-methylbutanoate (2-oxoisovalerate), the penultimate precursor to L-isoleucine and L-valine, respectively. The chain is Dihydroxy-acid dehydratase from Ruegeria pomeroyi (strain ATCC 700808 / DSM 15171 / DSS-3) (Silicibacter pomeroyi).